A 66-amino-acid chain; its full sequence is Large ribosomal subunit protein uL29 (66 aa).

It belongs to the universal ribosomal protein uL29 family.

The protein is Large ribosomal subunit protein uL29 of Pseudothermotoga lettingae (strain ATCC BAA-301 / DSM 14385 / NBRC 107922 / TMO) (Thermotoga lettingae).